A 163-amino-acid chain; its full sequence is NADH-quinone oxidoreductase subunit I (163 aa).

4Fe-4S ferredoxin-type domains follow at residues 54 to 84 (LRRY…IDSH) and 94 to 123 (TRYD…LTRL). 8 residues coordinate [4Fe-4S] cluster: Cys-64, Cys-67, Cys-70, Cys-74, Cys-103, Cys-106, Cys-109, and Cys-113.

It belongs to the complex I 23 kDa subunit family. NDH-1 is composed of 14 different subunits. Subunits NuoA, H, J, K, L, M, N constitute the membrane sector of the complex. Requires [4Fe-4S] cluster as cofactor.

The protein resides in the cell inner membrane. The enzyme catalyses a quinone + NADH + 5 H(+)(in) = a quinol + NAD(+) + 4 H(+)(out). In terms of biological role, NDH-1 shuttles electrons from NADH, via FMN and iron-sulfur (Fe-S) centers, to quinones in the respiratory chain. The immediate electron acceptor for the enzyme in this species is believed to be ubiquinone. Couples the redox reaction to proton translocation (for every two electrons transferred, four hydrogen ions are translocated across the cytoplasmic membrane), and thus conserves the redox energy in a proton gradient. This chain is NADH-quinone oxidoreductase subunit I, found in Halorhodospira halophila (strain DSM 244 / SL1) (Ectothiorhodospira halophila (strain DSM 244 / SL1)).